The primary structure comprises 205 residues: Probable molybdenum cofactor guanylyltransferase (205 aa).

GTP-binding positions include Leu9–Gly11, Lys21, Asp66, and Asp95. Asp95 is a binding site for Mg(2+).

Belongs to the MobA family. Mg(2+) is required as a cofactor.

Its subcellular location is the cytoplasm. The catalysed reaction is Mo-molybdopterin + GTP + H(+) = Mo-molybdopterin guanine dinucleotide + diphosphate. Functionally, transfers a GMP moiety from GTP to Mo-molybdopterin (Mo-MPT) cofactor (Moco or molybdenum cofactor) to form Mo-molybdopterin guanine dinucleotide (Mo-MGD) cofactor. This Pelotomaculum thermopropionicum (strain DSM 13744 / JCM 10971 / SI) protein is Probable molybdenum cofactor guanylyltransferase.